A 125-amino-acid chain; its full sequence is Mini-ribonuclease 3 (125 aa).

Residue Asp11 is part of the active site.

Belongs to the MrnC RNase family. In terms of assembly, homodimer. Mg(2+) is required as a cofactor.

Its subcellular location is the cytoplasm. In terms of biological role, involved in correct processing of both the 5' and 3' ends of 23S rRNA precursor. Processes 30S rRNA precursor transcript even in absence of ribonuclease 3 (Rnc); Rnc processes 30S rRNA into smaller rRNA precursors. This chain is Mini-ribonuclease 3, found in Acholeplasma laidlawii (strain PG-8A).